The primary structure comprises 281 residues: 2,3,4,5-tetrahydropyridine-2,6-dicarboxylate N-succinyltransferase (281 aa).

2 residues coordinate substrate: R108 and D145.

Belongs to the transferase hexapeptide repeat family. In terms of assembly, homotrimer.

The protein resides in the cytoplasm. The enzyme catalyses (S)-2,3,4,5-tetrahydrodipicolinate + succinyl-CoA + H2O = (S)-2-succinylamino-6-oxoheptanedioate + CoA. The protein operates within amino-acid biosynthesis; L-lysine biosynthesis via DAP pathway; LL-2,6-diaminopimelate from (S)-tetrahydrodipicolinate (succinylase route): step 1/3. This is 2,3,4,5-tetrahydropyridine-2,6-dicarboxylate N-succinyltransferase from Nitrobacter hamburgensis (strain DSM 10229 / NCIMB 13809 / X14).